A 547-amino-acid chain; its full sequence is Phenylalanine--tRNA ligase beta subunit (547 aa).

In terms of domain architecture, B5 spans 269–344 (LDVRFMEVDV…IGYGYENITP (76 aa)). The Mg(2+) site is built by Asp322, Asp328, Glu331, and Asp332.

It belongs to the phenylalanyl-tRNA synthetase beta subunit family. Type 2 subfamily. In terms of assembly, tetramer of two alpha and two beta subunits. Mg(2+) is required as a cofactor.

The protein resides in the cytoplasm. It carries out the reaction tRNA(Phe) + L-phenylalanine + ATP = L-phenylalanyl-tRNA(Phe) + AMP + diphosphate + H(+). The chain is Phenylalanine--tRNA ligase beta subunit from Archaeoglobus fulgidus (strain ATCC 49558 / DSM 4304 / JCM 9628 / NBRC 100126 / VC-16).